The sequence spans 744 residues: Eukaryotic translation initiation factor 3 subunit B (744 aa).

The segment at M1–L21 is disordered. Over residues P11–L21 the composition is skewed to acidic residues. Residues T40 to D126 form the RRM domain. WD repeat units follow at residues D193 to R232, A234 to S290, P307 to K348, and A577 to E622.

The protein belongs to the eIF-3 subunit B family. In terms of assembly, component of the eukaryotic translation initiation factor 3 (eIF-3) complex.

It is found in the cytoplasm. In terms of biological role, RNA-binding component of the eukaryotic translation initiation factor 3 (eIF-3) complex, which is involved in protein synthesis of a specialized repertoire of mRNAs and, together with other initiation factors, stimulates binding of mRNA and methionyl-tRNAi to the 40S ribosome. The eIF-3 complex specifically targets and initiates translation of a subset of mRNAs involved in cell proliferation. The protein is Eukaryotic translation initiation factor 3 subunit B (prt1) of Botryotinia fuckeliana (strain B05.10) (Noble rot fungus).